The sequence spans 220 residues: MSDDILFVSNGNGKAIFLTSRAVLVKSFCSLSKTCSFKDSCQSCEIVDAAKSYLMGKKSDLNVKSLDGELSAGIGEYKIGKNVLLKVMGLGSCIGVILSDVSTGICGIAHVLLPGASNSGEAKYAETAIENMFEDMIRMGARKNRITAKFAGGAQVFKHMSLDILKIGDRNAISVEETLVKRNIPILAKDVGGEVGRNVIFNPVDGSMIVKYTKGEVLWL.

It belongs to the CheD family.

The catalysed reaction is L-glutaminyl-[protein] + H2O = L-glutamyl-[protein] + NH4(+). Probably deamidates glutamine residues to glutamate on methyl-accepting chemotaxis receptors (MCPs), playing an important role in chemotaxis. The polypeptide is Probable chemoreceptor glutamine deamidase CheD 2 (Methanosarcina acetivorans (strain ATCC 35395 / DSM 2834 / JCM 12185 / C2A)).